Consider the following 122-residue polypeptide: uncharacterized protein (122 aa).

Position 55 is a phosphothreonine (Thr-55). A phosphoserine mark is found at Ser-72, Ser-86, Ser-96, Ser-112, and Ser-118.

The protein localises to the cytoplasm. This is an uncharacterized protein from Homo sapiens (Human).